The following is a 447-amino-acid chain: N-succinylarginine dihydrolase (447 aa).

Residues 19–28 (AGLSFGNEAS), N110, and 137–138 (HR) contribute to the substrate site. E174 is an active-site residue. R213 provides a ligand contact to substrate. The active site involves H249. Substrate-binding residues include D251 and N364. C370 (nucleophile) is an active-site residue.

It belongs to the succinylarginine dihydrolase family. Homodimer.

The enzyme catalyses N(2)-succinyl-L-arginine + 2 H2O + 2 H(+) = N(2)-succinyl-L-ornithine + 2 NH4(+) + CO2. It functions in the pathway amino-acid degradation; L-arginine degradation via AST pathway; L-glutamate and succinate from L-arginine: step 2/5. Its function is as follows. Catalyzes the hydrolysis of N(2)-succinylarginine into N(2)-succinylornithine, ammonia and CO(2). The protein is N-succinylarginine dihydrolase of Yersinia pseudotuberculosis serotype O:1b (strain IP 31758).